The following is a 512-amino-acid chain: Probable ubiquitin carboxyl-terminal hydrolase 3 (512 aa).

A disordered region spans residues 64 to 109; the sequence is TSKTKESEKSPKSWSAIAKKHVQGDSPVKKSHSVPVPSDRSEKKSF. A USP domain is found at 133–511; it reads RGFINTGNIC…VAYLLFYTRR (379 aa). The Nucleophile role is filled by cysteine 142. Catalysis depends on histidine 453, which acts as the Proton acceptor.

This sequence belongs to the peptidase C19 family.

The catalysed reaction is Thiol-dependent hydrolysis of ester, thioester, amide, peptide and isopeptide bonds formed by the C-terminal Gly of ubiquitin (a 76-residue protein attached to proteins as an intracellular targeting signal).. This Schizosaccharomyces pombe (strain 972 / ATCC 24843) (Fission yeast) protein is Probable ubiquitin carboxyl-terminal hydrolase 3 (ubp3).